Consider the following 130-residue polypeptide: Type VII secretion system extracellular protein C (130 aa).

Belongs to the EsxC family. In terms of assembly, forms both homodimers and heterodimers with EsxA. Homodimerization is calcium-dependent.

It is found in the secreted. Its function is as follows. Implements its pathogenic function during infection. The chain is Type VII secretion system extracellular protein C from Staphylococcus aureus (strain Mu50 / ATCC 700699).